Reading from the N-terminus, the 410-residue chain is WD repeat and FYVE domain-containing protein 1 (410 aa).

6 WD repeats span residues 22–61 (GHQD…QYWP), 66–105 (TMAS…NKMN), 112–150 (AHQN…NMLG), 153–192 (FFSS…CSVI), 197–236 (GHEG…GRTL), and 240–279 (GHHD…EEAP). The segment at 281–352 (WLESDSCQKC…VCDSCYDSIK (72 aa)) adopts an FYVE-type zinc-finger fold. Residues C287, C290, C314, C317, C322, C325, C344, and C347 each coordinate Zn(2+). Residues 364–403 (EGKHNISHMSMDIARGLMVTCGTDRVVKIWDMTPVVGCSL) form a WD 7 repeat. Position 408 is a phosphoserine (S408).

In terms of assembly, binds PtdIns3P in vitro with high specificity over other phosphoinositides. Interacts (via WD repeat 2) with tyrosine-phosphorylated TLR3 (via TIR domain) in response to poly(I:C). Interacts with TLR4 in response to LPS. Interacts with TICAM1 in response to poly(I:C).

Its subcellular location is the early endosome. In terms of biological role, positively regulates TLR3- and TLR4-mediated signaling pathways by bridging the interaction between TLR3 or TLR4 and TICAM1. Promotes TLR3/4 ligand-induced activation of transcription factors IRF3 and NF-kappa-B, as well as the production of IFN-beta and inflammatory cytokines. This Mus musculus (Mouse) protein is WD repeat and FYVE domain-containing protein 1 (Wdfy1).